We begin with the raw amino-acid sequence, 156 residues long: 6,7-dimethyl-8-ribityllumazine synthase (156 aa).

Residues F22, 57-59, and 81-83 each bind 5-amino-6-(D-ribitylamino)uracil; these read AVE and SVI. Residue 86 to 87 coordinates (2S)-2-hydroxy-3-oxobutyl phosphate; it reads GT. H89 functions as the Proton donor in the catalytic mechanism. F114 lines the 5-amino-6-(D-ribitylamino)uracil pocket. R128 contributes to the (2S)-2-hydroxy-3-oxobutyl phosphate binding site.

This sequence belongs to the DMRL synthase family. In terms of assembly, forms an icosahedral capsid composed of 60 subunits, arranged as a dodecamer of pentamers.

The catalysed reaction is (2S)-2-hydroxy-3-oxobutyl phosphate + 5-amino-6-(D-ribitylamino)uracil = 6,7-dimethyl-8-(1-D-ribityl)lumazine + phosphate + 2 H2O + H(+). Its pathway is cofactor biosynthesis; riboflavin biosynthesis; riboflavin from 2-hydroxy-3-oxobutyl phosphate and 5-amino-6-(D-ribitylamino)uracil: step 1/2. Its function is as follows. Catalyzes the formation of 6,7-dimethyl-8-ribityllumazine by condensation of 5-amino-6-(D-ribitylamino)uracil with 3,4-dihydroxy-2-butanone 4-phosphate. This is the penultimate step in the biosynthesis of riboflavin. This chain is 6,7-dimethyl-8-ribityllumazine synthase, found in Aliivibrio salmonicida (strain LFI1238) (Vibrio salmonicida (strain LFI1238)).